The following is a 753-amino-acid chain: Probable TonB-dependent siderophore receptor PiuA (753 aa).

The signal sequence occupies residues 1-35 (MSRQSTDTAVSSQRLLASAIGVAITAIAAPQAAQA). The region spanning 79–185 (PLLDTPKTVT…TGGSLNLISK (107 aa)) is the TBDR plug domain. Positions 190 to 753 (DNFTDAGFTW…TALLGVNFHF (564 aa)) constitute a TBDR beta-barrel domain. A disulfide bridge links Cys-420 with Cys-430.

This sequence belongs to the TonB-dependent receptor family.

The protein resides in the cell outer membrane. Involved in the initial step of iron uptake by binding iron chelating siderophores, thereby allowing extraction of iron from the environment. Probably involved in the transport of siderophores, including host catecholamines such as dopamine. In Pseudomonas aeruginosa (strain ATCC 15692 / DSM 22644 / CIP 104116 / JCM 14847 / LMG 12228 / 1C / PRS 101 / PAO1), this protein is Probable TonB-dependent siderophore receptor PiuA.